Consider the following 381-residue polypeptide: Queuine tRNA-ribosyltransferase (381 aa).

Asp-89 functions as the Proton acceptor in the catalytic mechanism. Substrate is bound by residues 89–93 (DSGGF), Asp-143, Gln-187, and Gly-214. Residues 245–251 (GVGKPED) form an RNA binding region. Catalysis depends on Asp-264, which acts as the Nucleophile. Residues 269–273 (TRNAR) are RNA binding; important for wobble base 34 recognition. Residues Cys-302, Cys-304, Cys-307, and His-333 each contribute to the Zn(2+) site.

The protein belongs to the queuine tRNA-ribosyltransferase family. As to quaternary structure, homodimer. Within each dimer, one monomer is responsible for RNA recognition and catalysis, while the other monomer binds to the replacement base PreQ1. The cofactor is Zn(2+).

The catalysed reaction is 7-aminomethyl-7-carbaguanine + guanosine(34) in tRNA = 7-aminomethyl-7-carbaguanosine(34) in tRNA + guanine. It functions in the pathway tRNA modification; tRNA-queuosine biosynthesis. Catalyzes the base-exchange of a guanine (G) residue with the queuine precursor 7-aminomethyl-7-deazaguanine (PreQ1) at position 34 (anticodon wobble position) in tRNAs with GU(N) anticodons (tRNA-Asp, -Asn, -His and -Tyr). Catalysis occurs through a double-displacement mechanism. The nucleophile active site attacks the C1' of nucleotide 34 to detach the guanine base from the RNA, forming a covalent enzyme-RNA intermediate. The proton acceptor active site deprotonates the incoming PreQ1, allowing a nucleophilic attack on the C1' of the ribose to form the product. After dissociation, two additional enzymatic reactions on the tRNA convert PreQ1 to queuine (Q), resulting in the hypermodified nucleoside queuosine (7-(((4,5-cis-dihydroxy-2-cyclopenten-1-yl)amino)methyl)-7-deazaguanosine). The sequence is that of Queuine tRNA-ribosyltransferase from Pectobacterium carotovorum subsp. carotovorum (strain PC1).